Consider the following 83-residue polypeptide: Carboxysome shell vertex protein CsoS4A (83 aa).

The region spanning 1 to 78 (MKIMQVEKTL…SDLTIIGIID (78 aa)) is the BMV domain.

Belongs to the CcmL/EutN family. CsoS4 subfamily. In terms of assembly, homopentamer.

It is found in the carboxysome. In terms of biological role, probably forms vertices in the carboxysome, a polyhedral inclusion where RuBisCO (ribulose bisphosphate carboxylase, cbbL-cbbS) is sequestered. Has been modeled to induce curvature upon insertion into an otherwise flat hexagonal layer of major carboxysome subunits. A minor shell protein, only 12 pentamers of CsoS4A/CsoS4B are calculated to be present in each carboxysome. The 2 CsoS4 proteins contribute to the impermeability of the carboxysome to CO(2). Its function is as follows. Unlike beta-carboxysomes, alpha-carboxysomes (Cb) can form without cargo protein. CsoS2 is essential for Cb formation and is also capable of targeting foreign proteins to the Cb. The Cb shell assembles with the aid of CsoS2; CsoS1A, CsoS1B and CsoS1C form the majority of the shell while CsoS4A and CsoS4B form vertices. CsoS1D forms pseudohexamers that probably control metabolite flux into and out of the shell. The sequence is that of Carboxysome shell vertex protein CsoS4A from Halothiobacillus neapolitanus (strain ATCC 23641 / c2) (Thiobacillus neapolitanus).